The chain runs to 342 residues: Farnesyl pyrophosphate synthase 1 (342 aa).

The isopentenyl diphosphate site is built by K47, R50, and Q86. Mg(2+)-binding residues include D93 and D97. R102 is a dimethylallyl diphosphate binding site. R103 contributes to the isopentenyl diphosphate binding site. Positions 190, 191, 229, 246, and 255 each coordinate dimethylallyl diphosphate.

This sequence belongs to the FPP/GGPP synthase family. Mg(2+) serves as cofactor.

Its subcellular location is the cytoplasm. The catalysed reaction is isopentenyl diphosphate + dimethylallyl diphosphate = (2E)-geranyl diphosphate + diphosphate. The enzyme catalyses isopentenyl diphosphate + (2E)-geranyl diphosphate = (2E,6E)-farnesyl diphosphate + diphosphate. Its pathway is isoprenoid biosynthesis; farnesyl diphosphate biosynthesis; farnesyl diphosphate from geranyl diphosphate and isopentenyl diphosphate: step 1/1. It functions in the pathway isoprenoid biosynthesis; geranyl diphosphate biosynthesis; geranyl diphosphate from dimethylallyl diphosphate and isopentenyl diphosphate: step 1/1. Functionally, catalyzes the sequential condensation of isopentenyl pyrophosphate with the allylic pyrophosphates, dimethylallyl pyrophosphate, and then with the resultant geranylpyrophosphate to the ultimate product farnesyl pyrophosphate. This chain is Farnesyl pyrophosphate synthase 1 (FPS1), found in Lupinus albus (White lupine).